The sequence spans 107 residues: Ferredoxin (107 aa).

Positions 1–8 (MVSGVSRN) are excised as a propeptide. The [2Fe-2S] cluster site is built by cysteine 45, cysteine 51, and cysteine 54.

The cofactor is [2Fe-2S] cluster.

It localises to the hydrogenosome. Functionally, ferredoxins are iron-sulfur proteins that transfer electrons in a wide variety of metabolic reactions. The chain is Ferredoxin from Psalteriomonas lanterna (Amoeboflagellate).